We begin with the raw amino-acid sequence, 340 residues long: 3-isopropylmalate dehydrogenase (340 aa).

Residues R88, R98, R122, and D212 each contribute to the substrate site. Positions 212, 236, and 240 each coordinate Mg(2+). An NAD(+)-binding site is contributed by 272-284 (GSAPDIMGKGIAD).

Belongs to the isocitrate and isopropylmalate dehydrogenases family. LeuB type 2 subfamily. Homodimer. Mg(2+) is required as a cofactor. It depends on Mn(2+) as a cofactor.

Its subcellular location is the cytoplasm. The enzyme catalyses (2R,3S)-3-isopropylmalate + NAD(+) = 4-methyl-2-oxopentanoate + CO2 + NADH. The protein operates within amino-acid biosynthesis; L-leucine biosynthesis; L-leucine from 3-methyl-2-oxobutanoate: step 3/4. In terms of biological role, catalyzes the oxidation of 3-carboxy-2-hydroxy-4-methylpentanoate (3-isopropylmalate) to 3-carboxy-4-methyl-2-oxopentanoate. The product decarboxylates to 4-methyl-2 oxopentanoate. This Corynebacterium efficiens (strain DSM 44549 / YS-314 / AJ 12310 / JCM 11189 / NBRC 100395) protein is 3-isopropylmalate dehydrogenase.